The sequence spans 138 residues: ATP synthase epsilon chain (138 aa).

The protein belongs to the ATPase epsilon chain family. As to quaternary structure, F-type ATPases have 2 components, CF(1) - the catalytic core - and CF(0) - the membrane proton channel. CF(1) has five subunits: alpha(3), beta(3), gamma(1), delta(1), epsilon(1). CF(0) has three main subunits: a, b and c.

The protein resides in the cell membrane. Its function is as follows. Produces ATP from ADP in the presence of a proton gradient across the membrane. The protein is ATP synthase epsilon chain (atpC) of Buchnera aphidicola subsp. Schizaphis graminum (strain Sg).